A 247-amino-acid chain; its full sequence is C-X-C motif chemokine 16 (247 aa).

The signal sequence occupies residues 1–26 (MRRGFGPLALTLFLFFFALLTLPGDG). Over 27 to 198 (NQGSVAGSCY…EPGAGAGTQA (172 aa)) the chain is Extracellular. 2 cysteine pairs are disulfide-bonded: cysteine 35/cysteine 65 and cysteine 37/cysteine 79. The disordered stretch occupies residues 120-152 (IPEATEGKPPDTSTAVQFQSTQQSTFPSGAPSL). Positions 131–147 (TSTAVQFQSTQQSTFPS) are enriched in low complexity. Residues 199-219 (LVPVLSLLAIVFFLVAAMVCV) traverse the membrane as a helical segment. Over 220 to 247 (LCNRRVTRQSSSGLQLCYTPVEPRPQGL) the chain is Cytoplasmic.

This sequence belongs to the intercrine alpha (chemokine CxC) family. Post-translationally, glycosylated.

The protein resides in the membrane. In terms of biological role, induces a strong chemotactic response. Induces calcium mobilization. Binds to CXCR6/Bonzo. Also acts as a scavenger receptor on macrophages, which specifically binds to OxLDL (oxidized low density lipoprotein), suggesting that it may be involved in pathophysiology such as atherogenesis. This chain is C-X-C motif chemokine 16 (Cxcl16), found in Rattus norvegicus (Rat).